We begin with the raw amino-acid sequence, 691 residues long: Elongation factor G 2 (691 aa).

In terms of domain architecture, tr-type G spans 8–287 (DRYRNIGIMA…AVVDYLPSPL (280 aa)). GTP-binding positions include 17-24 (AHIDAGKT), 85-89 (DTPGH), and 139-142 (NKMD).

It belongs to the TRAFAC class translation factor GTPase superfamily. Classic translation factor GTPase family. EF-G/EF-2 subfamily.

It localises to the cytoplasm. Catalyzes the GTP-dependent ribosomal translocation step during translation elongation. During this step, the ribosome changes from the pre-translocational (PRE) to the post-translocational (POST) state as the newly formed A-site-bound peptidyl-tRNA and P-site-bound deacylated tRNA move to the P and E sites, respectively. Catalyzes the coordinated movement of the two tRNA molecules, the mRNA and conformational changes in the ribosome. This Myxococcus xanthus (strain DK1622) protein is Elongation factor G 2.